A 428-amino-acid chain; its full sequence is 5'-nucleotidase domain-containing protein 4 (428 aa).

Residue Asp22 is the Nucleophile of the active site. 3 residues coordinate Mg(2+): Asp22, Asp24, and Asp317. Asp24 acts as the Proton donor in catalysis.

This sequence belongs to the 5'(3')-deoxyribonucleotidase family.

This is 5'-nucleotidase domain-containing protein 4 (NT5DC4) from Homo sapiens (Human).